The following is a 265-amino-acid chain: Undecaprenyl-diphosphatase (265 aa).

The next 7 helical transmembrane spans lie at 38 to 58, 75 to 95, 108 to 128, 135 to 155, 181 to 201, 215 to 235, and 244 to 264; these read RSDFFNIVIQAGAILAICLAL, RDYVLKVSVAFLVTAVVGLIV, PVAWALLIGGVWMLVAEHVAG, VVTWKVAIAVGLAQVVAGVFP, FVFMVGIPTMFAASGYALLEM, VAVAFVAATITGFVVVKWLLS, and VFAVYRIVLGAALLLWLPAAA.

Belongs to the UppP family.

Its subcellular location is the cell inner membrane. The enzyme catalyses di-trans,octa-cis-undecaprenyl diphosphate + H2O = di-trans,octa-cis-undecaprenyl phosphate + phosphate + H(+). Functionally, catalyzes the dephosphorylation of undecaprenyl diphosphate (UPP). Confers resistance to bacitracin. The chain is Undecaprenyl-diphosphatase from Xanthomonas oryzae pv. oryzae (strain MAFF 311018).